The sequence spans 581 residues: MDFGDLLRYAKKNSDAVTKEVGQGKYYSTKYSPPKKQSKESKQLSSNIQKFLQKKEAEEAEKKRLERQKLNDLLAKRDEKSKNKIRKMLKVTKSANKSVLEDAKDYEGAIDGHEAGEGQGDDYGYVSTEANAFYDKYIEKVRDVQEDKGFTPSRPQSLKDLSGTKERVKAAITREREEAKGNTRQKSSTSTLPSSATKSKESSVARSYSTSKTLYDPNAEKLEEERKKRQEEEQRRAKIKRPAQPPPMDFQALLRLAEKKQHEPVVFEVEKKKEPERLLSAREKRELEERQRQQEQRAQRLKMRESEGKETPKSIPNRMEPNGRIPKLNQAKPANAPSDSFKKPTAPQPTKSSASSTSLSSSNSHSSASRSSVSSSRPATKSAQLTARPGATASAVGKPSSSSSRDVPSKNPYAATSLKGTVREFPPRDQSSISTLDRRKIPAAAKTRQTPSSDVQRSQGGRQFPPADVKRRKPNEPPVTKRRIYDDDDEDEYDSELDDFIDDGDCEEDISSHIRDIFGYDKRRYQGIDDDDRGMESSFAQVQREEFISKKLGMQEDLEDMRMEAAHKKQKKLVAKISSRS.

Residues 26 to 35 show a composition bias toward low complexity; that stretch reads YYSTKYSPPK. Disordered regions lie at residues 26 to 50 and 145 to 495; these read YYSTKYSPPKKQSKESKQLSSNIQK and QEDK…EYDS. Positions 36–76 form a coiled coil; sequence KQSKESKQLSSNIQKFLQKKEAEEAEKKRLERQKLNDLLAK. The span at 162 to 181 shows a compositional bias: basic and acidic residues; it reads SGTKERVKAAITREREEAKG. Polar residues-rich tracts occupy residues 182–197 and 204–213; these read NTRQKSSTSTLPSSAT and VARSYSTSKT. 2 stretches are compositionally biased toward basic and acidic residues: residues 218–236 and 256–312; these read NAEKLEEERKKRQEEEQRR and LAEK…KETP. Residues 276-307 are a coiled coil; that stretch reads ERLLSAREKRELEERQRQQEQRAQRLKMRESE. Positions 352 to 376 are enriched in low complexity; sequence SSASSTSLSSSNSHSSASRSSVSSS. Over residues 447 to 461 the composition is skewed to polar residues; it reads TRQTPSSDVQRSQGG. The segment covering 486–495 has biased composition (acidic residues); that stretch reads DDDDEDEYDS.

The protein belongs to the SPT2 family.

The protein is Protein SPT2 homolog of Drosophila melanogaster (Fruit fly).